An 80-amino-acid chain; its full sequence is Putative membrane protein insertion efficiency factor (80 aa).

Residues 60–80 (SKTGKDPVPDRFSLKRNQEGE) form a disordered region. Over residues 62 to 80 (TGKDPVPDRFSLKRNQEGE) the composition is skewed to basic and acidic residues.

Belongs to the UPF0161 family.

It localises to the cell membrane. In terms of biological role, could be involved in insertion of integral membrane proteins into the membrane. This chain is Putative membrane protein insertion efficiency factor, found in Streptococcus pneumoniae serotype 4 (strain ATCC BAA-334 / TIGR4).